The sequence spans 230 residues: ATP phosphoribosyltransferase (230 aa).

This sequence belongs to the ATP phosphoribosyltransferase family. Short subfamily. Heteromultimer composed of HisG and HisZ subunits.

The protein localises to the cytoplasm. It carries out the reaction 1-(5-phospho-beta-D-ribosyl)-ATP + diphosphate = 5-phospho-alpha-D-ribose 1-diphosphate + ATP. Its pathway is amino-acid biosynthesis; L-histidine biosynthesis; L-histidine from 5-phospho-alpha-D-ribose 1-diphosphate: step 1/9. In terms of biological role, catalyzes the condensation of ATP and 5-phosphoribose 1-diphosphate to form N'-(5'-phosphoribosyl)-ATP (PR-ATP). Has a crucial role in the pathway because the rate of histidine biosynthesis seems to be controlled primarily by regulation of HisG enzymatic activity. This chain is ATP phosphoribosyltransferase, found in Agrobacterium fabrum (strain C58 / ATCC 33970) (Agrobacterium tumefaciens (strain C58)).